A 329-amino-acid chain; its full sequence is CDP-diacylglycerol--glycerol-3-phosphate 3-phosphatidyltransferase 1, chloroplastic (329 aa).

The transit peptide at 1-38 (MAFLKTLNPLLRRSPTPIPNPRSLLSLDAFLAASSPTA) directs the protein to the chloroplast. 4 helical membrane passes run 150–170 (PVIG…TLAL), 190–210 (VFGS…VAIA), 217–237 (LHPG…GGAV), and 300–320 (ITVL…GYGI).

It belongs to the CDP-alcohol phosphatidyltransferase class-I family. It depends on Mn(2+) as a cofactor.

The protein localises to the plastid. It is found in the chloroplast membrane. The catalysed reaction is a CDP-1,2-diacyl-sn-glycerol + sn-glycerol 3-phosphate = a 1,2-diacyl-sn-glycero-3-phospho-(1'-sn-glycero-3'-phosphate) + CMP + H(+). Its pathway is phospholipid metabolism; phosphatidylglycerol biosynthesis; phosphatidylglycerol from CDP-diacylglycerol: step 1/2. Functionally, catalyzes the committed step to the synthesis of the acidic phospholipids. Transfers specifically a phosphatidyl group from CDP-diacylglycerol to glycerol-3-phosphate to form phosphatidylglycerophosphate. This Oryza sativa subsp. japonica (Rice) protein is CDP-diacylglycerol--glycerol-3-phosphate 3-phosphatidyltransferase 1, chloroplastic.